A 133-amino-acid chain; its full sequence is Chromosome transmission fidelity protein 8 (133 aa).

It belongs to the CTF8 family. As to quaternary structure, component of the CTF18-RFC complex, which consists of CTF18, CTF8, DSCC1, RFC2, RFC3, RFC4 and RFC5.

Its subcellular location is the nucleus. Essential for the fidelity of chromosome transmission. Required for the DNA replication block checkpoint. Component of the RFC-like complex CTF18-RFC which is required for efficient establishment of chromosome cohesion during S-phase and may load or unload POL30/PCNA. During a clamp loading circle, the RFC:clamp complex binds to DNA and the recognition of the double-stranded/single-stranded junction stimulates ATP hydrolysis by RFC. The complex presumably provides bipartite ATP sites in which one subunit supplies a catalytic site for hydrolysis of ATP bound to the neighboring subunit. Dissociation of RFC from the clamp leaves the clamp encircling DNA. The sequence is that of Chromosome transmission fidelity protein 8 (CTF8) from Saccharomyces cerevisiae (strain ATCC 204508 / S288c) (Baker's yeast).